A 212-amino-acid chain; its full sequence is Probable GH family 25 lysozyme 2 (212 aa).

The first 19 residues, 1-19, serve as a signal peptide directing secretion; sequence MRFIALLISFFALLKVISA. Residues 20–212 enclose the Ch-type lysozyme domain; it reads ISGVDISSAS…GLGFDLNWYP (193 aa). Active-site residues include aspartate 24, aspartate 112, and glutamate 114.

It belongs to the glycosyl hydrolase 25 family.

The protein localises to the secreted. The catalysed reaction is Hydrolysis of (1-&gt;4)-beta-linkages between N-acetylmuramic acid and N-acetyl-D-glucosamine residues in a peptidoglycan and between N-acetyl-D-glucosamine residues in chitodextrins.. This chain is Probable GH family 25 lysozyme 2, found in Dictyostelium discoideum (Social amoeba).